Reading from the N-terminus, the 183-residue chain is dTDP-4-dehydrorhamnose 3,5-epimerase (183 aa).

Residues Arg-24, Glu-29, 48–50, and Arg-60 each bind substrate; that span reads QDN. Residue His-63 is the Proton acceptor of the active site. 2 residues coordinate substrate: Lys-73 and His-120. The active-site Proton donor is Tyr-133. Glu-144 and Lys-169 together coordinate substrate.

The protein belongs to the dTDP-4-dehydrorhamnose 3,5-epimerase family. In terms of assembly, homodimer.

The catalysed reaction is dTDP-4-dehydro-6-deoxy-alpha-D-glucose = dTDP-4-dehydro-beta-L-rhamnose. It functions in the pathway carbohydrate biosynthesis; dTDP-L-rhamnose biosynthesis. It participates in bacterial outer membrane biogenesis; LPS O-antigen biosynthesis. In terms of biological role, catalyzes the epimerization of the C3' and C5'positions of dTDP-6-deoxy-D-xylo-4-hexulose, forming dTDP-6-deoxy-L-lyxo-4-hexulose. This chain is dTDP-4-dehydrorhamnose 3,5-epimerase, found in Salmonella typhimurium (strain LT2 / SGSC1412 / ATCC 700720).